The sequence spans 391 residues: Cathepsin E (391 aa).

Residues 1 to 19 (MKTFLLLLLVLLELGQAPG) form the signal peptide. Residues 20–53 (ALHRVPLSRRESLRKKLRAQGQLTELWKSQNLNM) constitute a propeptide, activation peptide. Positions 74 to 387 (YFGTISIGSP…DRGNNRVGLA (314 aa)) constitute a Peptidase A1 domain. N-linked (GlcNAc...) asparagine glycosylation is present at Asn86. Asp92 is an active-site residue. 2 disulfide bridges follow: Cys105-Cys110 and Cys267-Cys271. The active site involves Asp276. A disulfide bond links Cys309 and Cys346.

Belongs to the peptidase A1 family. Homodimer; disulfide-linked. Post-translationally, glycosylated. The nature of the carbohydrate chain varies between cell types. In terms of tissue distribution, expressed abundantly in the surface and foveolar epithelial cells of the fundic and pyloric stomach mucosa, and at very low levels in the spleen.

It is found in the endosome. It carries out the reaction Similar to cathepsin D, but slightly broader specificity.. Its function is as follows. May have a role in immune function. Probably involved in the processing of antigenic peptides during MHC class II-mediated antigen presentation. May play a role in activation-induced lymphocyte depletion in the thymus, and in neuronal degeneration and glial cell activation in the brain. The sequence is that of Cathepsin E (CTSE) from Cavia porcellus (Guinea pig).